Here is a 538-residue protein sequence, read N- to C-terminus: Putative cysteine ligase BshC (538 aa).

Residues 421–485 (VEEKFQEAKK…LERRHEVELN (65 aa)) are a coiled coil.

The protein belongs to the BshC family.

In terms of biological role, involved in bacillithiol (BSH) biosynthesis. May catalyze the last step of the pathway, the addition of cysteine to glucosamine malate (GlcN-Mal) to generate BSH. In Bacillus cytotoxicus (strain DSM 22905 / CIP 110041 / 391-98 / NVH 391-98), this protein is Putative cysteine ligase BshC.